The following is a 395-amino-acid chain: Nuclear hormone receptor family member nhr-10 (395 aa).

A DNA-binding region (nuclear receptor) is located at residues 15-90 (EEVCLVCSDI…VGMDRNAIQQ (76 aa)). 2 NR C4-type zinc fingers span residues 18 to 38 (CLVCSDISTGYHYGVPSCNGC) and 54 to 78 (CQFQGKCPVDKSIRCACRHCRFEKC). Positions 152–392 (PSRTLIEAVV…TFAKQLLFGI (241 aa)) constitute an NR LBD domain.

It belongs to the nuclear hormone receptor family.

It localises to the nucleus. Functionally, probable transcription factor that acts in a feed-forward loop with nhr-68 to activate genes involved in the vitamin B12-independent breakdown of the short-chain fatty acid propionate. This pathway is triggered in response to a diet low in vitamin B12, when canonical vitamin B12-dependent propionate breakdown cannot function; the resulting accumulation of propionate is probably sensed by nhr-10 and/or nhr-68. This Caenorhabditis elegans protein is Nuclear hormone receptor family member nhr-10 (nhr-10).